We begin with the raw amino-acid sequence, 257 residues long: Golgi SNAP receptor complex member 1-2 (257 aa).

Over 1-235 (MTESSLDLQE…GSIKRKRSRD (235 aa)) the chain is Cytoplasmic. Asn51 carries the post-translational modification Phosphoserine. The stretch at 113–147 (TQKLARHRDILHEYTQEFRRIKGNINSLREHAELL) forms a coiled coil. Residues 236-256 (TLILSAVIAACTLFLIIYWLS) traverse the membrane as a helical; Anchor for type IV membrane protein segment. Position 257 (Lys257) is a topological domain, vesicular.

This sequence belongs to the GOSR1 family. As to quaternary structure, component of several multiprotein Golgi SNARE complexes.

It is found in the golgi apparatus membrane. The protein resides in the endoplasmic reticulum membrane. In terms of biological role, involved in transport from the ER to the Golgi apparatus as well as in intra-Golgi transport. It belongs to a super-family of proteins called t-SNAREs or soluble NSF (N-ethylmaleimide-sensitive factor) attachment protein receptor. The chain is Golgi SNAP receptor complex member 1-2 (GOS12) from Arabidopsis thaliana (Mouse-ear cress).